A 302-amino-acid polypeptide reads, in one-letter code: Pyridoxal kinase (302 aa).

Serine 10, threonine 45, and tyrosine 122 together coordinate substrate. Residues 181-182 (TS) and 215-227 (VGPKFNDYYTGTG) each bind ATP. Aspartate 228 contributes to the substrate binding site.

The protein belongs to the pyridoxine kinase family. In terms of assembly, homodimer. A divalent metal cation is required as a cofactor.

It localises to the cytoplasm. It carries out the reaction pyridoxal + ATP = pyridoxal 5'-phosphate + ADP + H(+). Its pathway is cofactor metabolism; pyridoxal 5'-phosphate salvage; pyridoxal 5'-phosphate from pyridoxal: step 1/1. Required for synthesis of pyridoxal-5-phosphate from vitamin B6. The protein is Pyridoxal kinase (pykA) of Dictyostelium discoideum (Social amoeba).